A 1358-amino-acid polypeptide reads, in one-letter code: DNA-directed RNA polymerase subunit beta (1358 aa).

The protein belongs to the RNA polymerase beta chain family. In terms of assembly, the RNAP catalytic core consists of 2 alpha, 1 beta, 1 beta' and 1 omega subunit. When a sigma factor is associated with the core the holoenzyme is formed, which can initiate transcription.

It catalyses the reaction RNA(n) + a ribonucleoside 5'-triphosphate = RNA(n+1) + diphosphate. Its function is as follows. DNA-dependent RNA polymerase catalyzes the transcription of DNA into RNA using the four ribonucleoside triphosphates as substrates. This chain is DNA-directed RNA polymerase subunit beta, found in Methylococcus capsulatus (strain ATCC 33009 / NCIMB 11132 / Bath).